The primary structure comprises 510 residues: Cobyric acid synthase (510 aa).

Positions E262 to W460 constitute a GATase cobBQ-type domain. C343 serves as the catalytic Nucleophile. H452 is an active-site residue.

Belongs to the CobB/CobQ family. CobQ subfamily.

Its pathway is cofactor biosynthesis; adenosylcobalamin biosynthesis. Functionally, catalyzes amidations at positions B, D, E, and G on adenosylcobyrinic A,C-diamide. NH(2) groups are provided by glutamine, and one molecule of ATP is hydrogenolyzed for each amidation. In Prochlorococcus marinus (strain MIT 9515), this protein is Cobyric acid synthase.